The primary structure comprises 326 residues: Nucleoporin Nup37 (326 aa).

WD repeat units lie at residues 6–54 (SRNA…FQEE), 61–109 (IQYK…LFTS), 115–154 (NEYKVLEGHTDFINGLVFDPKEGQEIASVSDDHTCRIWNL), 159–195 (TAHFVLHSPGMSVCWHPEETFKLMVAEKNGTIRFYDL), 199–237 (QAILSLESEQVPLMSAHWCLKNTFKVGAVAGNDWLIWDI), 242–282 (YPQN…QFQI), and 287–324 (HPQPILMGSVAVGSGLSWHRTLPLCVIGGDHKLLFWVT).

As to quaternary structure, component of the Nup107-160 subcomplex of the nuclear pore complex (NPC). The Nup107-160 subcomplex includes NUP160, NUP133, NUP107, NUP98, NUP85, NUP43, NUP37, SEH1 and SEC13.

The protein resides in the chromosome. It is found in the centromere. The protein localises to the kinetochore. Its subcellular location is the nucleus. It localises to the nuclear pore complex. In terms of biological role, component of the Nup107-160 subcomplex of the nuclear pore complex (NPC). The Nup107-160 subcomplex is required for the assembly of a functional NPC. The Nup107-160 subcomplex is also required for normal kinetochore microtubule attachment, mitotic progression and chromosome segregation. The chain is Nucleoporin Nup37 (NUP37) from Homo sapiens (Human).